The following is a 298-amino-acid chain: Glutamate/glycine mitochondrial carrier ymc1 (298 aa).

Solcar repeat units follow at residues 14–98 (TKDF…CKRF), 106–193 (VTMP…LVKN), and 206–294 (TPGW…VSQH). A run of 6 helical transmembrane segments spans residues 17-37 (FLAGVSGGVAQVLVGQPFDCV), 67-87 (LAAFYKGTVLPLLGIGFCVSI), 112-132 (YVSGAISGLANSFLVGPVEHV), 172-192 (TAAREAHGLGMYFLAYEALVK), 212-232 (CVFGAGAGYAMWLAAYPFDIV), and 266-287 (FYRGFVPVLVRAAPANAVTFYV).

Belongs to the mitochondrial carrier (TC 2.A.29) family.

It is found in the mitochondrion inner membrane. Its function is as follows. Acts as a glutamate and glycine mitochondrial transmembrane transporter. The chain is Glutamate/glycine mitochondrial carrier ymc1 (ymc1) from Schizosaccharomyces pombe (strain 972 / ATCC 24843) (Fission yeast).